Here is a 283-residue protein sequence, read N- to C-terminus: Pantothenate synthetase (283 aa).

30 to 37 (MGNLHDGH) serves as a coordination point for ATP. The active-site Proton donor is the H37. Q61 is a binding site for (R)-pantoate. Beta-alanine is bound at residue Q61. 149–152 (GEKD) contacts ATP. Residue Q155 coordinates (R)-pantoate. An ATP-binding site is contributed by 186-189 (LSSR).

This sequence belongs to the pantothenate synthetase family. As to quaternary structure, homodimer.

Its subcellular location is the cytoplasm. It carries out the reaction (R)-pantoate + beta-alanine + ATP = (R)-pantothenate + AMP + diphosphate + H(+). The protein operates within cofactor biosynthesis; (R)-pantothenate biosynthesis; (R)-pantothenate from (R)-pantoate and beta-alanine: step 1/1. Its function is as follows. Catalyzes the condensation of pantoate with beta-alanine in an ATP-dependent reaction via a pantoyl-adenylate intermediate. This chain is Pantothenate synthetase, found in Escherichia coli O6:K15:H31 (strain 536 / UPEC).